The primary structure comprises 377 residues: Nitric oxide reductase FlRd-NAD(+) reductase (377 aa).

The protein belongs to the FAD-dependent oxidoreductase family. FAD is required as a cofactor.

It is found in the cytoplasm. It catalyses the reaction 2 reduced [nitric oxide reductase rubredoxin domain] + NAD(+) + H(+) = 2 oxidized [nitric oxide reductase rubredoxin domain] + NADH. Its pathway is nitrogen metabolism; nitric oxide reduction. In terms of biological role, one of at least two accessory proteins for anaerobic nitric oxide (NO) reductase. Reduces the rubredoxin moiety of NO reductase. This chain is Nitric oxide reductase FlRd-NAD(+) reductase, found in Salmonella arizonae (strain ATCC BAA-731 / CDC346-86 / RSK2980).